The sequence spans 482 residues: Adenylosuccinate lyase (482 aa).

Residues 14–15 (RY), 82–84 (RHD), and 108–109 (TS) each bind substrate. H156 acts as the Proton donor/acceptor in catalysis. A substrate-binding site is contributed by Q238. The active-site Proton donor/acceptor is the S286. Residues R300, R326, S331, and R335 each contribute to the substrate site.

It belongs to the lyase 1 family. Adenylosuccinate lyase subfamily. Homotetramer. Residues from neighboring subunits contribute catalytic and substrate-binding residues to each active site.

It catalyses the reaction N(6)-(1,2-dicarboxyethyl)-AMP = fumarate + AMP. The enzyme catalyses (2S)-2-[5-amino-1-(5-phospho-beta-D-ribosyl)imidazole-4-carboxamido]succinate = 5-amino-1-(5-phospho-beta-D-ribosyl)imidazole-4-carboxamide + fumarate. It functions in the pathway purine metabolism; AMP biosynthesis via de novo pathway; AMP from IMP: step 2/2. The protein operates within purine metabolism; IMP biosynthesis via de novo pathway; 5-amino-1-(5-phospho-D-ribosyl)imidazole-4-carboxamide from 5-amino-1-(5-phospho-D-ribosyl)imidazole-4-carboxylate: step 2/2. This is Adenylosuccinate lyase (ade8) from Schizosaccharomyces pombe (strain 972 / ATCC 24843) (Fission yeast).